A 146-amino-acid chain; its full sequence is Copper transporter 5 (146 aa).

A helical membrane pass occupies residues 24–44 (WLSYILTLIACFVFSAFYQYL). The disordered stretch occupies residues 55–74 (SSSRRAPPPPRSSSGVSAPL). Residues 101 to 121 (LLMLAAMSFNGGVFIAIVVGL) traverse the membrane as a helical segment.

The protein belongs to the copper transporter (Ctr) (TC 1.A.56) family. SLC31A subfamily. As to expression, highly expressed in leaves and stems and at lower levels in roots and flowers.

It is found in the membrane. Involved in the transport of copper. In Arabidopsis thaliana (Mouse-ear cress), this protein is Copper transporter 5 (COPT5).